The following is a 361-amino-acid chain: Cytochrome c peroxidase, mitochondrial (361 aa).

The N-terminal 67 residues, 1–67 (MTTAVRLLPS…NWGKAAALAS (67 aa)), are a transit peptide targeting the mitochondrion. Histidine 119 (proton acceptor) is an active-site residue. Position 220 is a phosphotyrosine (tyrosine 220). Histidine 242 is a heme b binding site. The Tryptophan radical intermediate role is filled by tryptophan 258.

This sequence belongs to the peroxidase family. Cytochrome c peroxidase subfamily. As to quaternary structure, forms a one-to-one complex with cytochrome c. Heme b is required as a cofactor. In terms of processing, CCP1 precursor is processed by the rhomboid protease PCP1, which cleaves the N-terminal hydrophobic transit peptide. The m-AAA protease (composed of YTA12/RCA1 and YTA10/AFG3) is required for CCP1 maturation: m-AAA protease promotes membrane dislocation of the CCP1 transmembrane segment within the transit peptide to ensure the correct positioning of CCP1 within the membrane bilayer, allowing intramembrane cleavage by PCP1.

Its subcellular location is the mitochondrion matrix. The protein localises to the mitochondrion intermembrane space. It carries out the reaction 2 Fe(II)-[cytochrome c] + H2O2 + 2 H(+) = 2 Fe(III)-[cytochrome c] + 2 H2O. Destroys radicals which are normally produced within the cells and which are toxic to biological systems. The protein is Cytochrome c peroxidase, mitochondrial (CCP1) of Saccharomyces cerevisiae (strain ATCC 204508 / S288c) (Baker's yeast).